The chain runs to 77 residues: U8-lycotoxin-Ls1w (77 aa).

An N-terminal signal peptide occupies residues 1–20 (MKLIIFTGLVLFAIVSLIEA). The propeptide occupies 21 to 26 (QAENEK).

Belongs to the neurotoxin 19 (CSTX) family. 08 (U8-Lctx) subfamily. Contains 4 disulfide bonds. Expressed by the venom gland.

The protein resides in the secreted. This is U8-lycotoxin-Ls1w from Lycosa singoriensis (Wolf spider).